The sequence spans 199 residues: GTP cyclohydrolase-2 (199 aa).

52-56 (RMHSE) lines the GTP pocket. Positions 57, 68, and 70 each coordinate Zn(2+). GTP is bound by residues glutamine 73, 94-96 (EGR), and threonine 116. The active-site Proton acceptor is the aspartate 128. Residue arginine 130 is the Nucleophile of the active site. GTP is bound by residues threonine 151 and lysine 156.

It belongs to the GTP cyclohydrolase II family. Requires Zn(2+) as cofactor.

The enzyme catalyses GTP + 4 H2O = 2,5-diamino-6-hydroxy-4-(5-phosphoribosylamino)-pyrimidine + formate + 2 phosphate + 3 H(+). It functions in the pathway cofactor biosynthesis; riboflavin biosynthesis; 5-amino-6-(D-ribitylamino)uracil from GTP: step 1/4. In terms of biological role, catalyzes the conversion of GTP to 2,5-diamino-6-ribosylamino-4(3H)-pyrimidinone 5'-phosphate (DARP), formate and pyrophosphate. This chain is GTP cyclohydrolase-2, found in Aliivibrio fischeri (strain ATCC 700601 / ES114) (Vibrio fischeri).